We begin with the raw amino-acid sequence, 1613 residues long: Vitellogenin-2 (1613 aa).

The N-terminal stretch at 1–15 (MRSIIIASLVALALA) is a signal peptide. Residues 24-687 (FEPKTDYHYK…EKNSFLPKDL (664 aa)) form the Vitellogenin domain. An N-linked (GlcNAc...) asparagine glycan is attached at Asn1268. The 170-residue stretch at 1308-1477 (SVCKVQKNQI…SYLLKNEECE (170 aa)) folds into the VWFD domain. Cystine bridges form between Cys1310–Cys1440 and Cys1332–Cys1476. Positions 1491–1531 (KYERDEEQSDEYSSEETYDYEQENTKKSQKNQRSQKKSDLV) are disordered. The segment covering 1495 to 1512 (DEEQSDEYSSEETYDYEQ) has biased composition (acidic residues).

As to expression, expressed in the intestine of adult hermaphrodites.

The protein localises to the secreted. In terms of biological role, precursor of the egg-yolk proteins that are sources of nutrients during embryonic development. Together with other vitellogenins, may play a role in modulating life-span, acting via induction of autophagy and lysosomal lipolysis. The protein is Vitellogenin-2 (vit-2) of Caenorhabditis elegans.